The chain runs to 548 residues: Fumarate hydratase class I, anaerobic (548 aa).

A [4Fe-4S] cluster-binding site is contributed by C105. Residue K192 is modified to N6-acetyllysine. [4Fe-4S] cluster-binding residues include C224 and C318.

Belongs to the class-I fumarase family. Homodimer. [4Fe-4S] cluster serves as cofactor.

The enzyme catalyses (S)-malate = fumarate + H2O. It catalyses the reaction (S,S)-tartrate = oxaloacetate + H2O. Its function is as follows. Catalyzes the reversible hydration of fumarate to (S)-malate. Functions in the generation of fumarate for use as an anaerobic electron acceptor. To a lesser extent, also displays D-tartrate dehydratase activity, but is not able to convert (R)-malate, L-tartrate or meso-tartrate. Is required for anaerobic growth on D-tartrate. The polypeptide is Fumarate hydratase class I, anaerobic (Escherichia coli (strain K12)).